Consider the following 131-residue polypeptide: UPF0102 protein YraN (131 aa).

Residues 1–19 (MATVPTRSGSPRQLTTKQT) show a composition bias toward polar residues. Residues 1–20 (MATVPTRSGSPRQLTTKQTG) are disordered.

This sequence belongs to the UPF0102 family.

The chain is UPF0102 protein YraN from Escherichia coli (strain 55989 / EAEC).